Reading from the N-terminus, the 256-residue chain is Triosephosphate isomerase (256 aa).

Substrate is bound at residue 9 to 11 (NWK). The active-site Electrophile is the His95. Glu167 (proton acceptor) is an active-site residue. Substrate contacts are provided by residues Gly173, Ser212, and 233-234 (GG).

It belongs to the triosephosphate isomerase family. As to quaternary structure, homodimer.

It localises to the cytoplasm. It carries out the reaction D-glyceraldehyde 3-phosphate = dihydroxyacetone phosphate. It participates in carbohydrate biosynthesis; gluconeogenesis. The protein operates within carbohydrate degradation; glycolysis; D-glyceraldehyde 3-phosphate from glycerone phosphate: step 1/1. Its function is as follows. Involved in the gluconeogenesis. Catalyzes stereospecifically the conversion of dihydroxyacetone phosphate (DHAP) to D-glyceraldehyde-3-phosphate (G3P). The protein is Triosephosphate isomerase of Proteus mirabilis (strain HI4320).